Here is a 228-residue protein sequence, read N- to C-terminus: ATP synthase subunit a (228 aa).

A run of 6 helical transmembrane segments spans residues 14-34 (YFLL…WLFF), 71-91 (WVPI…LGLL), 101-121 (ISLT…LGFY), 139-159 (FLLP…PIAL), 165-185 (ANLT…WVLM), and 188-208 (VAIA…EIGV).

This sequence belongs to the ATPase A chain family. In terms of assembly, F-type ATPases have 2 components, CF(1) - the catalytic core - and CF(0) - the membrane proton channel. CF(1) has five subunits: alpha(3), beta(3), gamma(1), delta(1), epsilon(1). CF(0) has three main subunits: a, b and c.

It localises to the mitochondrion inner membrane. Functionally, mitochondrial membrane ATP synthase (F(1)F(0) ATP synthase or Complex V) produces ATP from ADP in the presence of a proton gradient across the membrane which is generated by electron transport complexes of the respiratory chain. F-type ATPases consist of two structural domains, F(1) - containing the extramembraneous catalytic core and F(0) - containing the membrane proton channel, linked together by a central stalk and a peripheral stalk. During catalysis, ATP synthesis in the catalytic domain of F(1) is coupled via a rotary mechanism of the central stalk subunits to proton translocation. Key component of the proton channel; it may play a direct role in the translocation of protons across the membrane. This chain is ATP synthase subunit a (ATP6), found in Pisaster ochraceus (Ochre sea star).